A 556-amino-acid chain; its full sequence is Formate--tetrahydrofolate ligase (556 aa).

An ATP-binding site is contributed by 65–72 (TPAGEGKS).

It belongs to the formate--tetrahydrofolate ligase family.

The enzyme catalyses (6S)-5,6,7,8-tetrahydrofolate + formate + ATP = (6R)-10-formyltetrahydrofolate + ADP + phosphate. The protein operates within one-carbon metabolism; tetrahydrofolate interconversion. This Streptococcus pneumoniae serotype 19F (strain G54) protein is Formate--tetrahydrofolate ligase.